We begin with the raw amino-acid sequence, 382 residues long: 1-deoxy-D-xylulose 5-phosphate reductoisomerase (382 aa).

6 residues coordinate NADPH: T10, G11, S12, I13, N38, and N120. Position 121 (K121) interacts with 1-deoxy-D-xylulose 5-phosphate. E122 lines the NADPH pocket. D146 contributes to the Mn(2+) binding site. Residues S147, E148, S172, and H195 each contribute to the 1-deoxy-D-xylulose 5-phosphate site. Position 148 (E148) interacts with Mn(2+). An NADPH-binding site is contributed by G201. Residues S208, N213, K214, and E217 each coordinate 1-deoxy-D-xylulose 5-phosphate. E217 serves as a coordination point for Mn(2+).

It belongs to the DXR family. Requires Mg(2+) as cofactor. Mn(2+) is required as a cofactor.

The enzyme catalyses 2-C-methyl-D-erythritol 4-phosphate + NADP(+) = 1-deoxy-D-xylulose 5-phosphate + NADPH + H(+). Its pathway is isoprenoid biosynthesis; isopentenyl diphosphate biosynthesis via DXP pathway; isopentenyl diphosphate from 1-deoxy-D-xylulose 5-phosphate: step 1/6. Functionally, catalyzes the NADPH-dependent rearrangement and reduction of 1-deoxy-D-xylulose-5-phosphate (DXP) to 2-C-methyl-D-erythritol 4-phosphate (MEP). This chain is 1-deoxy-D-xylulose 5-phosphate reductoisomerase, found in Thermoanaerobacter sp. (strain X514).